Reading from the N-terminus, the 162-residue chain is Phosphopantetheine adenylyltransferase (162 aa).

Thr10 contributes to the substrate binding site. ATP-binding positions include 10 to 11 and His18; that span reads TF. Lys42, Met74, and Arg88 together coordinate substrate. Residues 89-91, Glu99, and 124-130 each bind ATP; these read GLR and YAFLSST.

The protein belongs to the bacterial CoaD family. In terms of assembly, homohexamer. Mg(2+) serves as cofactor.

It is found in the cytoplasm. The catalysed reaction is (R)-4'-phosphopantetheine + ATP + H(+) = 3'-dephospho-CoA + diphosphate. It functions in the pathway cofactor biosynthesis; coenzyme A biosynthesis; CoA from (R)-pantothenate: step 4/5. Reversibly transfers an adenylyl group from ATP to 4'-phosphopantetheine, yielding dephospho-CoA (dPCoA) and pyrophosphate. The sequence is that of Phosphopantetheine adenylyltransferase from Aliivibrio salmonicida (strain LFI1238) (Vibrio salmonicida (strain LFI1238)).